The following is a 280-amino-acid chain: MFDMSSSSSGWVAEIYLRYQLKRGITRLIERKQVGPLMVQRPFYPEHGSSHTYLLHPPGGVVAGDLLSINVVVEEGAHSLITTPGATKFYRSIGEVARQAQNLRVEEDAFLEWLPLENIFFPSAAAILETNISLKVSSRFIGWDMLCFGRPMLNETFESGNVIGQTKIFVDDKLILADSLCVDSTKFKAAGMREFPMLGAMYIYPASEALKELVHRSIQDYLMQTKESLEIGLTDVDGLLTVRALGHQTEEIMGCLVLIWKTCRKLWLGYVPDIPRIWAT.

The protein belongs to the UreD family. As to quaternary structure, ureD, UreF and UreG form a complex that acts as a GTP-hydrolysis-dependent molecular chaperone, activating the urease apoprotein by helping to assemble the nickel containing metallocenter of UreC. The UreE protein probably delivers the nickel.

Its subcellular location is the cytoplasm. Its function is as follows. Required for maturation of urease via the functional incorporation of the urease nickel metallocenter. The protein is Urease accessory protein UreD of Vibrio parahaemolyticus.